Reading from the N-terminus, the 140-residue chain is Large ribosomal subunit protein uL14x/uL14z/uL14y (140 aa).

This sequence belongs to the universal ribosomal protein uL14 family.

This chain is Large ribosomal subunit protein uL14x/uL14z/uL14y (RPL23A), found in Arabidopsis thaliana (Mouse-ear cress).